Here is a 1021-residue protein sequence, read N- to C-terminus: Collagen alpha-1(I) chain (1021 aa).

The interval 1–1021 (DEKSAGGISV…PGPPGPPGPP (1021 aa)) is disordered. Lysine 3 is subject to Allysine. Serine 4 carries the phosphoserine modification. 11 positions are modified to 4-hydroxyproline: proline 23, proline 26, proline 29, proline 38, proline 41, proline 44, proline 59, proline 74, proline 80, proline 89, and proline 95. The span at 31-50 (PQGFQGPPGEPGEPGASGPM) shows a compositional bias: low complexity. The span at 62–76 (NGDDGEAGKPGRPGE) shows a compositional bias: basic and acidic residues. Lysine 98 carries the 5-hydroxylysine; alternate modification. Residue lysine 98 is glycosylated (O-linked (Gal...) hydroxylysine; alternate). Position 104 is a phosphoserine (serine 104). The span at 112-128 (DAGPAGPKGEPGSPGEN) shows a compositional bias: low complexity. 4-hydroxyproline is present on residues proline 122, proline 125, proline 131, proline 140, proline 146, proline 167, proline 176, proline 179, proline 206, proline 209, proline 221, proline 227, proline 236, proline 242, proline 245, and proline 260. Residues 146–164 (PGASGPAGARGNDGATGAA) are compositionally biased toward low complexity. Positions 166–178 (PPGPTGPAGPPGF) are enriched in pro residues. The segment covering 212-262 (AGAAGPAGNPGADGQPGAKGANGAPGIAGAPGFPGARGPSGPQGPSGAPGP) has biased composition (low complexity). Lysine 263 is modified (5-hydroxylysine). Residues proline 269, proline 272, proline 284, proline 293, proline 308, proline 314, proline 323, and proline 329 each carry the 4-hydroxyproline modification. Over residues 318-327 (GERGGPGSRG) the composition is skewed to gly residues. Lysine 338 carries the 5-hydroxylysine modification. A 4-hydroxyproline mark is found at proline 347, proline 356, proline 362, proline 368, proline 377, proline 380, proline 389, proline 398, proline 404, proline 416, proline 425, proline 434, proline 437, proline 455, proline 472, proline 478, proline 484, proline 490, proline 496, proline 502, proline 514, proline 523, proline 534, proline 546, proline 549, proline 555, proline 561, and proline 570. Residues 371–425 (KGLTGSPGSPGPDGKTGPPGPAGQDGRPGPAGPPGARGQAGVMGFPGPKGAAGEP) are compositionally biased toward low complexity. Residues 484–493 (PGEAGKPGEQ) are compositionally biased toward low complexity. Low complexity predominate over residues 536-558 (NDGAKGDAGAPGAPGSQGAPGLQ). A 5-hydroxylysine modification is found at lysine 582. Proline 588 and proline 603 each carry 4-hydroxyproline. The segment covering 615–629 (AGPSGPAGPTGARGA) has biased composition (low complexity). Serine 618 is modified (phosphoserine). 4-hydroxyproline occurs at positions 630, 636, 639, 648, 654, 681, and 690. Residues 642 to 672 (AGFAGPPGADGQPGAKGEPGDAGAKGDAGPS) are compositionally biased toward low complexity. Lysine 693 is modified (5-hydroxylysine). A compositionally biased stretch (low complexity) spans 698–714 (SAGPPGATGFPGAAGRV). 4-hydroxyproline is present on residues proline 702 and proline 708. The residue at position 716 (proline 716) is a 3-hydroxyproline. Residues proline 717, proline 726, proline 729, proline 750, proline 759, proline 768, proline 777, proline 794, proline 803, proline 806, proline 812, proline 827, proline 833, proline 839, proline 848, and proline 854 each carry the 4-hydroxyproline modification. The segment covering 743-752 (ETGPAGRPGE) has biased composition (low complexity). The segment covering 762–777 (SGEKGSPGADGPAGAP) has biased composition (low complexity). Residues 826-836 (PPGPMGPPGLA) show a composition bias toward pro residues. The segment covering 838–853 (PPGEAGREGSPGAEGS) has biased composition (low complexity). Lysine 863 carries the 5-hydroxylysine modification. Over residues 871–886 (PGPPGAPGAPGAPGPV) the composition is skewed to pro residues. 4-hydroxyproline occurs at positions 874, 877, and 880. A compositionally biased stretch (low complexity) spans 907–921 (AGPAGARGPAGPQGP). The segment covering 922 to 936 (RGDKGETGEQGDRGI) has biased composition (basic and acidic residues). 5-hydroxylysine is present on lysine 925. 5-hydroxylysine; alternate is present on lysine 937. A glycan (O-linked (Gal...) hydroxylysine; alternate) is linked at lysine 937. 4-hydroxyproline is present on residues proline 952, proline 955, proline 973, and proline 988. Over residues 955 to 988 (PGEQGPSGASGPAGPRGPPGSAGTPGKDGLNGLP) the composition is skewed to low complexity. The residue at position 993 (proline 993) is a 3-hydroxyproline. Residue proline 994 is modified to 4-hydroxyproline. Residues 1006–1021 (VGPPGPPGPPGPPGPP) show a composition bias toward pro residues. At proline 1008 the chain carries 3-hydroxyproline. The residue at position 1009 (proline 1009) is a 4-hydroxyproline. At proline 1011 the chain carries 3-hydroxyproline. Proline 1012 carries the post-translational modification 4-hydroxyproline. 3-hydroxyproline is present on proline 1014. Residues proline 1015, proline 1018, and proline 1021 each carry the 4-hydroxyproline modification.

This sequence belongs to the fibrillar collagen family. In terms of assembly, trimers of one alpha 2(I) and two alpha 1(I) chains. Contains mostly 4-hydroxyproline. Proline residues at the third position of the tripeptide repeating unit (G-X-Y) are hydroxylated in some or all of the chains. Post-translationally, contains 3-hydroxyproline at a few sites. This modification occurs on the first proline residue in the sequence motif Gly-Pro-Hyp, where Hyp is 4-hydroxyproline. In terms of processing, lysine residues at the third position of the tripeptide repeating unit (G-X-Y) are 5-hydroxylated in some or all of the chains. O-glycosylated on hydroxylated lysine residues. The O-linked glycan consists of a Glc-Gal disaccharide. As to expression, expressed in bones.

The protein resides in the secreted. Its subcellular location is the extracellular space. The protein localises to the extracellular matrix. Its function is as follows. Type I collagen is a member of group I collagen (fibrillar forming collagen). This Doedicurus sp. (South American giant glyptodont) protein is Collagen alpha-1(I) chain.